A 319-amino-acid chain; its full sequence is tRNA uridine(34) hydroxylase (319 aa).

The Rhodanese domain maps to L124–E218. C178 (cysteine persulfide intermediate) is an active-site residue.

It belongs to the TrhO family.

It catalyses the reaction uridine(34) in tRNA + AH2 + O2 = 5-hydroxyuridine(34) in tRNA + A + H2O. Functionally, catalyzes oxygen-dependent 5-hydroxyuridine (ho5U) modification at position 34 in tRNAs. The chain is tRNA uridine(34) hydroxylase from Listeria monocytogenes serotype 4b (strain CLIP80459).